The following is a 159-amino-acid chain: Ribosomal RNA large subunit methyltransferase H (159 aa).

Residues L76, G108, and 127-132 each bind S-adenosyl-L-methionine; that span reads FSRMTF.

The protein belongs to the RNA methyltransferase RlmH family. As to quaternary structure, homodimer.

Its subcellular location is the cytoplasm. The catalysed reaction is pseudouridine(1915) in 23S rRNA + S-adenosyl-L-methionine = N(3)-methylpseudouridine(1915) in 23S rRNA + S-adenosyl-L-homocysteine + H(+). Specifically methylates the pseudouridine at position 1915 (m3Psi1915) in 23S rRNA. The chain is Ribosomal RNA large subunit methyltransferase H from Bacillus licheniformis (strain ATCC 14580 / DSM 13 / JCM 2505 / CCUG 7422 / NBRC 12200 / NCIMB 9375 / NCTC 10341 / NRRL NRS-1264 / Gibson 46).